Here is a 413-residue protein sequence, read N- to C-terminus: 3-oxoacyl-[acyl-carrier-protein] synthase 2 (413 aa).

A Ketosynthase family 3 (KS3) domain is found at 3-412; sequence KRRVVVTGLG…GTNGSLIFKK (410 aa). Residues Cys164, His304, and His341 each act as for beta-ketoacyl synthase activity in the active site.

Belongs to the thiolase-like superfamily. Beta-ketoacyl-ACP synthases family. In terms of assembly, homodimer.

The enzyme catalyses a fatty acyl-[ACP] + malonyl-[ACP] + H(+) = a 3-oxoacyl-[ACP] + holo-[ACP] + CO2. It carries out the reaction (9Z)-hexadecenoyl-[ACP] + malonyl-[ACP] + H(+) = 3-oxo-(11Z)-octadecenoyl-[ACP] + holo-[ACP] + CO2. It participates in lipid metabolism; fatty acid biosynthesis. Involved in the type II fatty acid elongation cycle. Catalyzes the elongation of a wide range of acyl-ACP by the addition of two carbons from malonyl-ACP to an acyl acceptor. Can efficiently catalyze the conversion of palmitoleoyl-ACP (cis-hexadec-9-enoyl-ACP) to cis-vaccenoyl-ACP (cis-octadec-11-enoyl-ACP), an essential step in the thermal regulation of fatty acid composition. The sequence is that of 3-oxoacyl-[acyl-carrier-protein] synthase 2 (fabF) from Escherichia coli O157:H7.